The following is a 166-amino-acid chain: KH homology domain-containing protein 1C (166 aa).

Residues 19–78 form the KH; atypical domain; sequence PLVFDMEEDKEDYIFGPHDEYLHTLEVHSNTLIQLERWFTPTGQTRVTVVGPLKARLWVM.

This sequence belongs to the KHDC1 family.

The protein is KH homology domain-containing protein 1C (Khdc1c) of Mus musculus (Mouse).